Consider the following 427-residue polypeptide: TNF receptor-associated factor family protein DDB_G0285149 (427 aa).

The segment at 20–65 (CIVCTDLLSESHDKIQVNQCPHGHCLCSDCWTKQIENKKKECPICR) adopts an RING-type zinc-finger fold. TRAF-type zinc fingers lie at residues 122-178 (THFK…INKD) and 178-234 (DHLE…KHQA). One can recognise an MATH domain in the interval 284–415 (KYSNQWVIEN…GNKLTIKFEI (132 aa)).

This sequence belongs to the TNF receptor-associated factor family. A subfamily.

The protein resides in the cytoplasm. Its function is as follows. Probable adapter protein and signal transducer that links members of the tumor necrosis factor receptor family to different signaling pathways by association with the receptor cytoplasmic domain and kinases. The sequence is that of TNF receptor-associated factor family protein DDB_G0285149 from Dictyostelium discoideum (Social amoeba).